Consider the following 418-residue polypeptide: Histidine--tRNA ligase (418 aa).

The protein belongs to the class-II aminoacyl-tRNA synthetase family. Homodimer.

The protein resides in the cytoplasm. The catalysed reaction is tRNA(His) + L-histidine + ATP = L-histidyl-tRNA(His) + AMP + diphosphate + H(+). This is Histidine--tRNA ligase from Dehalococcoides mccartyi (strain ATCC BAA-2100 / JCM 16839 / KCTC 5957 / BAV1).